The following is a 375-amino-acid chain: Proton-coupled zinc antiporter SLC30A8 (375 aa).

Residues 1–68 (MKGPEKAYLV…QREQTSAKKK (68 aa)) are Cytoplasmic-facing. Residues histidine 46, cysteine 47, and histidine 48 each contribute to the Zn(2+) site. The short motif at 46 to 48 (HCH) is the HCH Motif; seals regulatory zinc-binding pocket element. A helical membrane pass occupies residues 69-89 (LCIASLICFVFISAEIVGGYI). Residues 90 to 98 (AGSLAVVTD) lie on the Lumenal, vesicle side of the membrane. Residues 99-119 (AAHLLVDLSSFFISLGSLWLS) traverse the membrane as a helical segment. Residues histidine 101 and aspartate 105 each coordinate Zn(2+). Residues 120–135 (SKSSTMRLTFGWYRAE) are Cytoplasmic-facing. Residues 136-156 (ILGALMSIITIWLVTGVLVYL) traverse the membrane as a helical segment. Topologically, residues 157–170 (AIERIIRPDYTIDG) are lumenal, vesicle. A helical membrane pass occupies residues 171 to 191 (TVMLITSACALGANVVLALIL). The Cytoplasmic segment spans residues 192–223 (HQSGHGHSHAGGKHEHMASEYKPQTNASIRAA). The helical transmembrane segment at 224–244 (FIHVIGDLFQSISVLISALII) threads the bilayer. Histidine 226 and aspartate 230 together coordinate Zn(2+). At 245-251 (YFKPEYK) the chain is on the lumenal, vesicle side. The helical transmembrane segment at 252-272 (IADPICTFIFSIFVLITTVTV) threads the bilayer. The Cytoplasmic portion of the chain corresponds to 273-375 (LRDLLNILME…ECMFCYEPTQ (103 aa)). 6 residues coordinate Zn(2+): histidine 307, histidine 324, histidine 351, glutamate 358, cysteine 367, and cysteine 370.

The protein belongs to the cation diffusion facilitator (CDF) transporter (TC 2.A.4) family. SLC30A subfamily. As to quaternary structure, homodimer.

Its subcellular location is the cytoplasmic vesicle. The protein resides in the secretory vesicle membrane. The protein localises to the cell membrane. It carries out the reaction Zn(2+)(in) + 2 H(+)(out) = Zn(2+)(out) + 2 H(+)(in). Functionally, proton-coupled zinc ion antiporter mediating the entry of zinc into the lumen of pancreatic beta cell secretory granules, thereby regulating insulin secretion. This Xenopus laevis (African clawed frog) protein is Proton-coupled zinc antiporter SLC30A8 (slc30a8).